The primary structure comprises 312 residues: Malate dehydrogenase (312 aa).

NAD(+) contacts are provided by residues 7-13 (GAAGGIG) and D34. R81 and R87 together coordinate substrate. Residues N94 and 117–119 (ITN) contribute to the NAD(+) site. Positions 119 and 153 each coordinate substrate. H177 acts as the Proton acceptor in catalysis. Residue M227 participates in NAD(+) binding.

The protein belongs to the LDH/MDH superfamily. MDH type 1 family. Homodimer.

The catalysed reaction is (S)-malate + NAD(+) = oxaloacetate + NADH + H(+). Functionally, catalyzes the reversible oxidation of malate to oxaloacetate. This is Malate dehydrogenase from Klebsiella pneumoniae (strain 342).